Consider the following 420-residue polypeptide: Probable ABC transporter-binding protein DR_1438 (420 aa).

Positions 1–24 (MKKFAAVLGLTVAFAAASQAHAVT) are cleaved as a signal peptide.

This sequence belongs to the bacterial solute-binding protein 1 family.

Probably part of a binding-protein-dependent transport system. The sequence is that of Probable ABC transporter-binding protein DR_1438 from Deinococcus radiodurans (strain ATCC 13939 / DSM 20539 / JCM 16871 / CCUG 27074 / LMG 4051 / NBRC 15346 / NCIMB 9279 / VKM B-1422 / R1).